We begin with the raw amino-acid sequence, 178 residues long: MAKRKKKEVFDWEDEDQEEIIWVSKSEIKRDAEDLKQLGEKIVNLTKANLAKIPLDESLLDAIELAQRLQKEARRRQLQYIGKLFRGIDVEPIREALDKIENKHNQQQAMLHKIEKVCDELVEKGDVALTDLLNDYPDGDRQQLRNLIRSAQKELEQNKPSKAYREIYQMLKVLMLED.

This sequence belongs to the DarP family.

Its subcellular location is the cytoplasm. Its function is as follows. Member of a network of 50S ribosomal subunit biogenesis factors which assembles along the 30S-50S interface, preventing incorrect 23S rRNA structures from forming. Promotes peptidyl transferase center (PTC) maturation. The sequence is that of Dual-action ribosomal maturation protein DarP from Haemophilus influenzae (strain 86-028NP).